The following is an 80-amino-acid chain: Defensin-like protein 14 (80 aa).

Residues methionine 1–alanine 29 form the signal peptide. Position 30 is a pyrrolidone carboxylic acid (glutamine 30). Cystine bridges form between cysteine 33–cysteine 80, cysteine 44–cysteine 65, cysteine 50–cysteine 74, and cysteine 54–cysteine 76.

It belongs to the DEFL family.

It is found in the secreted. Functionally, confers broad-spectrum resistance to pathogens. Has antifungal activity in vitro. The protein is Defensin-like protein 14 (PDF1.3) of Arabidopsis thaliana (Mouse-ear cress).